Reading from the N-terminus, the 399-residue chain is Sex hormone-binding globulin (399 aa).

The first 29 residues, methionine 1–arginine 29, serve as a signal peptide directing secretion. Laminin G-like domains follow at residues arginine 43–cysteine 214 and glycine 221–cysteine 387. Residue asparagine 160 is glycosylated (N-linked (GlcNAc...) asparagine). The cysteines at positions 191 and 214 are disulfide-linked. N-linked (GlcNAc...) asparagine glycosylation is found at asparagine 270, asparagine 353, asparagine 377, and asparagine 393. A disulfide bond links cysteine 359 and cysteine 387.

In terms of assembly, homodimer. In terms of processing, differentially glycosylated in liver (SHBG) and testis (ABP).

The protein resides in the secreted. Functionally, functions as an androgen transport protein, but may also be involved in receptor mediated processes. Each dimer binds one molecule of steroid. Specific for 5-alpha-dihydrotestosterone, testosterone, and 17-beta-estradiol. Regulates the plasma metabolic clearance rate of steroid hormones by controlling their plasma concentration. This is Sex hormone-binding globulin (SHBG) from Phodopus sungorus (Striped hairy-footed hamster).